The following is a 243-amino-acid chain: MNVSQDTIYAQASEHISDFQFDNRVAGVFSDMIRRSVPGYTQIINTIGDFADRFVMPNTQIYDLGCSLGAATLSIRRQIQGRQCRIIAVDNSESMVARCQENLNAYVSDTDVDLVCGDIRDIDIQNASLVVLNFTLQFLPPEDRETLIAKIYQGLNPGGILVLSEKIRFEDAPIQTLLEEQHLDFKRANGYSELEISQKRSALENVMKPDTLTTHQQRLTSQGFSHFSLWFQCFNFASMVAIK.

S-adenosyl-L-methionine-binding positions include Tyr40, 65-67, 90-91, 118-119, Asn133, and Arg200; these read GCS, DN, and DI.

Belongs to the class I-like SAM-binding methyltransferase superfamily. Cx-SAM synthase family. In terms of assembly, homodimer.

It carries out the reaction prephenate + S-adenosyl-L-methionine = carboxy-S-adenosyl-L-methionine + 3-phenylpyruvate + H2O. Its function is as follows. Catalyzes the conversion of S-adenosyl-L-methionine (SAM) to carboxy-S-adenosyl-L-methionine (Cx-SAM). The chain is Carboxy-S-adenosyl-L-methionine synthase from Shewanella baltica (strain OS155 / ATCC BAA-1091).